A 360-amino-acid polypeptide reads, in one-letter code: MIIYATAVQTINSFVKLESLKEVYGLIWIFVPIFSLVLGIITGVLVIVWLEREISAGIQQRIGPEYAGPLGILQALADGTKLLFKENLRPSRGNTPLFSIGPSIAVISILLSYSVIPFSNHLVLADLNIGIFLWIAISSIAPIGLLMSGYGSNNKYSFLGGLRAAAQSISYEIPLTLCVLSISLLSNSLSTVDIVEAQSKYGFWGWNLWRQPIGFIIFLISSLAECERLPFDLPEAEEELIAGYQTEYSGIKFGLFYVASYLNLLISSLFVTVLYLGGWNISIPYISILELFQRDQIFGTTIGIFITLAKTYLFLFVSIATRWTLPRLRMDQLLNLGWKFLLPISLGNLLLTTSFQLFSL.

A run of 8 helical transmembrane segments spans residues 27-47 (IWIFVPIFSLVLGIITGVLVI), 98-118 (FSIGPSIAVISILLSYSVIPF), 129-149 (IGIFLWIAISSIAPIGLLMSG), 165-185 (AAQSISYEIPLTLCVLSISLL), 203-223 (FWGWNLWRQPIGFIIFLISSL), 253-273 (FGLFYVASYLNLLISSLFVTV), 297-317 (IFGTTIGIFITLAKTYLFLFV), and 340-360 (FLLPISLGNLLLTTSFQLFSL).

The protein belongs to the complex I subunit 1 family. NDH is composed of at least 16 different subunits, 5 of which are encoded in the nucleus.

The protein resides in the plastid. It localises to the chloroplast thylakoid membrane. It carries out the reaction a plastoquinone + NADH + (n+1) H(+)(in) = a plastoquinol + NAD(+) + n H(+)(out). The catalysed reaction is a plastoquinone + NADPH + (n+1) H(+)(in) = a plastoquinol + NADP(+) + n H(+)(out). Functionally, NDH shuttles electrons from NAD(P)H:plastoquinone, via FMN and iron-sulfur (Fe-S) centers, to quinones in the photosynthetic chain and possibly in a chloroplast respiratory chain. The immediate electron acceptor for the enzyme in this species is believed to be plastoquinone. Couples the redox reaction to proton translocation, and thus conserves the redox energy in a proton gradient. The sequence is that of NAD(P)H-quinone oxidoreductase subunit 1, chloroplastic from Arabidopsis thaliana (Mouse-ear cress).